Consider the following 847-residue polypeptide: Bifunctional lysine-specific demethylase and histidyl-hydroxylase NO66 (847 aa).

A compositionally biased stretch (polar residues) spans 1–24 (MEKVTNSAAAKPQGNNKKQESAYN). 3 disordered regions span residues 1–45 (MEKV…SDLL), 203–223 (AEAD…KESV), and 254–320 (AEKE…ERKQ). Over residues 203-214 (AEADAKNNDTKK) the composition is skewed to basic and acidic residues. Positions 268–278 (STSSKEAAAAK) are enriched in low complexity. Over residues 279–288 (TADHERRLLA) the composition is skewed to basic and acidic residues. The span at 304–314 (AMESVATQGAS) shows a compositional bias: polar residues. Serine 323 is modified (phosphoserine). Threonine 329 carries the post-translational modification Phosphothreonine. A Phosphoserine modification is found at serine 330. Residues 377 to 401 (KAPEEGNNNNDEKEMSTETSETHKT) are disordered. The segment covering 386 to 401 (NDEKEMSTETSETHKT) has biased composition (basic and acidic residues). One can recognise a JmjC domain in the interval 499-644 (CSIRLLNPSA…NLLETLMPMV (146 aa)). Residues histidine 545, aspartate 547, and histidine 610 each contribute to the Fe cation site.

It belongs to the ROX family. NO66 subfamily. Fe(2+) serves as cofactor.

It is found in the nucleus. It catalyses the reaction N(6),N(6)-dimethyl-L-lysyl(36)-[histone H3] + 2 2-oxoglutarate + 2 O2 = L-lysyl(36)-[histone H3] + 2 formaldehyde + 2 succinate + 2 CO2. Functionally, oxygenase that can act as both a histone lysine demethylase and a ribosomal histidine hydroxylase. Specifically demethylates 'Lys-4' (H3K4me) and 'Lys-36' (H3K36me) of histone H3, thereby playing a central role in histone code. The chain is Bifunctional lysine-specific demethylase and histidyl-hydroxylase NO66 from Drosophila simulans (Fruit fly).